Reading from the N-terminus, the 450-residue chain is UDP-N-acetylmuramoylalanine--D-glutamate ligase (450 aa).

Residue 112-118 coordinates ATP; that stretch reads GSNGKTT.

Belongs to the MurCDEF family.

It localises to the cytoplasm. The enzyme catalyses UDP-N-acetyl-alpha-D-muramoyl-L-alanine + D-glutamate + ATP = UDP-N-acetyl-alpha-D-muramoyl-L-alanyl-D-glutamate + ADP + phosphate + H(+). It participates in cell wall biogenesis; peptidoglycan biosynthesis. Cell wall formation. Catalyzes the addition of glutamate to the nucleotide precursor UDP-N-acetylmuramoyl-L-alanine (UMA). This is UDP-N-acetylmuramoylalanine--D-glutamate ligase from Cytophaga hutchinsonii (strain ATCC 33406 / DSM 1761 / CIP 103989 / NBRC 15051 / NCIMB 9469 / D465).